The following is a 163-amino-acid chain: Urease accessory protein UreE (163 aa).

The interval 134-163 (EAGAYGGGHRHHHDDDAPSIRQPARLRIHE) is disordered.

This sequence belongs to the UreE family.

The protein resides in the cytoplasm. Its function is as follows. Involved in urease metallocenter assembly. Binds nickel. Probably functions as a nickel donor during metallocenter assembly. In Methylobacillus flagellatus (strain ATCC 51484 / DSM 6875 / VKM B-1610 / KT), this protein is Urease accessory protein UreE.